A 299-amino-acid chain; its full sequence is Ubiquinol-cytochrome c reductase complex assembly factor 1 (299 aa).

It belongs to the CBP3 family. Interacts with UQCC2. Interacts with UQCC3. Forms a complex, named COMB/coordinator of mitochondrial CYTB biogenesis, composed of UQCC1, UQCC2, UQCC4, UQCC5 and UQCC6; stabilizes nascent cytochrome b/MT-CYB and promotes its membrane insertion. Forms a complex, named COMB/coordinator of mitochondrial CYTB biogenesis, composed of UQCC1, UQCC2, UQCC4, UQCC5 and UQCC6; stabilizes nascent cytochrome b/MT-CYB and promotes its membrane insertion. Forms a complex, named COMA, composed of UQCC1, UQCC2 and UQCC4; activates MT-CYB translation. Forms a complex, named COMC, composed of UQCC1, UQCC2; UQCC3 and UQCC4; mediates MT-CYB hemylation and association with the first nuclear-encoded CIII subunit UQCRQ.

Its subcellular location is the mitochondrion inner membrane. It is found in the cytoplasmic vesicle. In terms of biological role, required for the assembly of the ubiquinol-cytochrome c reductase complex (mitochondrial respiratory chain complex III or cytochrome b-c1 complex). Involved in cytochrome b translation and/or stability. This is Ubiquinol-cytochrome c reductase complex assembly factor 1 (UQCC1) from Homo sapiens (Human).